A 263-amino-acid chain; its full sequence is MKEKKNKKFALGVEYDGSYYHGWQSQKGLSTIQSEIEKALSKIANHQVNVICAGRTDSGVHSIGQVIHFTSISFRSDFSWIVGVNSYLSKNISVKWIKEVSENFNARYSAISRSYRYIIYNHKCRSAIFRNRSNHVYKELNVDKMYFEAQSLLGEHDFSSFRSSGCQSRSPFRTITDLNIRRLKNLVIIDITANSFLYHMVRNIVGSLIQINDNTKKNYIKKILDKKDRNYAGPTVSARGLYLFFVKYPMCFNLPIFKDDFII.

Aspartate 57 (nucleophile) is an active-site residue. Tyrosine 115 provides a ligand contact to substrate.

The protein belongs to the tRNA pseudouridine synthase TruA family. Homodimer.

The catalysed reaction is uridine(38/39/40) in tRNA = pseudouridine(38/39/40) in tRNA. Its function is as follows. Formation of pseudouridine at positions 38, 39 and 40 in the anticodon stem and loop of transfer RNAs. This Buchnera aphidicola subsp. Schizaphis graminum (strain Sg) protein is tRNA pseudouridine synthase A.